Reading from the N-terminus, the 339-residue chain is Holliday junction branch migration complex subunit RuvB (339 aa).

Positions 1–180 (MTRTITPDMT…FGVISRLEFY (180 aa)) are large ATPase domain (RuvB-L). Residues L19, R20, G61, K64, T65, T66, 127-129 (EDF), R170, Y180, and R217 each bind ATP. Residue T65 participates in Mg(2+) binding. The small ATPAse domain (RuvB-S) stretch occupies residues 181–251 (TIEELAFIIT…VVQDALALLE (71 aa)). The segment at 254-339 (HMGFDYMDRM…EPPQGKLFQD (86 aa)) is head domain (RuvB-H). Residues R309 and R314 each contribute to the DNA site.

It belongs to the RuvB family. In terms of assembly, homohexamer. Forms an RuvA(8)-RuvB(12)-Holliday junction (HJ) complex. HJ DNA is sandwiched between 2 RuvA tetramers; dsDNA enters through RuvA and exits via RuvB. An RuvB hexamer assembles on each DNA strand where it exits the tetramer. Each RuvB hexamer is contacted by two RuvA subunits (via domain III) on 2 adjacent RuvB subunits; this complex drives branch migration. In the full resolvosome a probable DNA-RuvA(4)-RuvB(12)-RuvC(2) complex forms which resolves the HJ.

The protein localises to the cytoplasm. The enzyme catalyses ATP + H2O = ADP + phosphate + H(+). Its function is as follows. The RuvA-RuvB-RuvC complex processes Holliday junction (HJ) DNA during genetic recombination and DNA repair, while the RuvA-RuvB complex plays an important role in the rescue of blocked DNA replication forks via replication fork reversal (RFR). RuvA specifically binds to HJ cruciform DNA, conferring on it an open structure. The RuvB hexamer acts as an ATP-dependent pump, pulling dsDNA into and through the RuvAB complex. RuvB forms 2 homohexamers on either side of HJ DNA bound by 1 or 2 RuvA tetramers; 4 subunits per hexamer contact DNA at a time. Coordinated motions by a converter formed by DNA-disengaged RuvB subunits stimulates ATP hydrolysis and nucleotide exchange. Immobilization of the converter enables RuvB to convert the ATP-contained energy into a lever motion, pulling 2 nucleotides of DNA out of the RuvA tetramer per ATP hydrolyzed, thus driving DNA branch migration. The RuvB motors rotate together with the DNA substrate, which together with the progressing nucleotide cycle form the mechanistic basis for DNA recombination by continuous HJ branch migration. Branch migration allows RuvC to scan DNA until it finds its consensus sequence, where it cleaves and resolves cruciform DNA. The sequence is that of Holliday junction branch migration complex subunit RuvB from Geotalea daltonii (strain DSM 22248 / JCM 15807 / FRC-32) (Geobacter daltonii).